Reading from the N-terminus, the 887-residue chain is Alanine--tRNA ligase (887 aa).

The Zn(2+) site is built by H573, H577, C676, and H680.

Belongs to the class-II aminoacyl-tRNA synthetase family. It depends on Zn(2+) as a cofactor.

The protein localises to the cytoplasm. The enzyme catalyses tRNA(Ala) + L-alanine + ATP = L-alanyl-tRNA(Ala) + AMP + diphosphate. Catalyzes the attachment of alanine to tRNA(Ala) in a two-step reaction: alanine is first activated by ATP to form Ala-AMP and then transferred to the acceptor end of tRNA(Ala). Also edits incorrectly charged Ser-tRNA(Ala) and Gly-tRNA(Ala) via its editing domain. This is Alanine--tRNA ligase from Corynebacterium jeikeium (strain K411).